A 1503-amino-acid chain; its full sequence is Dynein axonemal assembly factor 1 homolog (1503 aa).

LRR repeat units lie at residues 34–56 (RLND…EEYT), 57–78 (ELKC…EKLG), 79–100 (KLKC…DPCR), 101–122 (ELDT…GTNI), 125–146 (VLNT…SDLI), and 150–171 (TLSV…KIFE). An LRRCT domain is found at 185–223 (PVVSRLPQYRKTLILACKELTYLDSRPVFPRDRACAEAW). Disordered regions lie at residues 249–280 (SINC…DDTC), 305–328 (EQPI…TSSQ), 956–1033 (DSGD…DHDE), and 1295–1315 (STNN…STSE). Positions 973–985 (TESEDYDTAEDEY) are enriched in acidic residues. The segment covering 1014-1031 (QKQDKPDTVEEVGKKNDH) has biased composition (basic and acidic residues). The span at 1303–1314 (TKKTLPTKTSTS) shows a compositional bias: low complexity.

It belongs to the DNAAF1 family.

Its subcellular location is the cell projection. It is found in the cilium. Its function is as follows. Cilium-specific protein required for cilia structures. The protein is Dynein axonemal assembly factor 1 homolog (dtr) of Drosophila erecta (Fruit fly).